The primary structure comprises 741 residues: Phosphoribosylformylglycinamidine synthase subunit PurL (741 aa).

His-53 is a catalytic residue. Residues Tyr-56 and Lys-95 each contribute to the ATP site. Glu-97 lines the Mg(2+) pocket. Substrate is bound by residues 98–101 (SHNH) and Arg-120. Residue His-99 is the Proton acceptor of the active site. Residue Asp-121 coordinates Mg(2+). Substrate is bound at residue Gln-244. Residue Asp-274 coordinates Mg(2+). 318 to 320 (ESQ) contributes to the substrate binding site. Residues Asp-501 and Gly-538 each contribute to the ATP site. Asn-539 is a Mg(2+) binding site. Ser-541 lines the substrate pocket.

Belongs to the FGAMS family. As to quaternary structure, monomer. Part of the FGAM synthase complex composed of 1 PurL, 1 PurQ and 2 PurS subunits.

It localises to the cytoplasm. The catalysed reaction is N(2)-formyl-N(1)-(5-phospho-beta-D-ribosyl)glycinamide + L-glutamine + ATP + H2O = 2-formamido-N(1)-(5-O-phospho-beta-D-ribosyl)acetamidine + L-glutamate + ADP + phosphate + H(+). It functions in the pathway purine metabolism; IMP biosynthesis via de novo pathway; 5-amino-1-(5-phospho-D-ribosyl)imidazole from N(2)-formyl-N(1)-(5-phospho-D-ribosyl)glycinamide: step 1/2. Its function is as follows. Part of the phosphoribosylformylglycinamidine synthase complex involved in the purines biosynthetic pathway. Catalyzes the ATP-dependent conversion of formylglycinamide ribonucleotide (FGAR) and glutamine to yield formylglycinamidine ribonucleotide (FGAM) and glutamate. The FGAM synthase complex is composed of three subunits. PurQ produces an ammonia molecule by converting glutamine to glutamate. PurL transfers the ammonia molecule to FGAR to form FGAM in an ATP-dependent manner. PurS interacts with PurQ and PurL and is thought to assist in the transfer of the ammonia molecule from PurQ to PurL. The protein is Phosphoribosylformylglycinamidine synthase subunit PurL of Latilactobacillus sakei subsp. sakei (strain 23K) (Lactobacillus sakei subsp. sakei).